Here is a 422-residue protein sequence, read N- to C-terminus: Putative polyketide beta-ketoacyl synthase 1 (422 aa).

In terms of domain architecture, Ketosynthase family 3 (KS3) spans 2–416 (SRRVVVTGIG…GFQSAVVLTG (415 aa)). Active-site for beta-ketoacyl synthase activity residues include C169, H309, and H346.

It belongs to the thiolase-like superfamily. Beta-ketoacyl-ACP synthases family.

Functionally, involved in developmentally regulated synthesis of a compound biosynthetically related to polyketide antibiotics which is essential for spore color in Streptomyces halstedii. The protein is Putative polyketide beta-ketoacyl synthase 1 (sch1) of Streptomyces halstedii.